Reading from the N-terminus, the 630-residue chain is MITYNGGNYDVVVVGAGHAGCEAALATARMGYSTMMLTMSLDAIAMLPCNPSIGGTGKGHLVREIDALGGEMGLNIDKTFIQSRMLNTAKGPAVHSLRAQADKTRYHIEMKKMLENEPNLHLLQGEVVDIIVEDNTVKGVVTKTGAIYYGKAVILATGVYLKSKIFMGEVNYESGPNGLFPALYLSEKLKALGCNMRRFKTGTPARIHKDSIDFSKVSVQIEDEEIVPFSFMNEALEKEQIPCWLTRTTEETHRIIKENLGRSAMYRGDIESTGPRYCPSIEDKIVRFSEKPSHQIFIEPEGAETKEMYIQGFSTSLPEEVQVQMVRSVIGLENAIIMRPAYAIEYDCIDPTQLKASLEVKHINNLFSAGQFNGSSGYEEAAAQGLMAGINAVLKIRGEDPFILDRSEAYIGVLIDDLVTKGTNEPYRMMTSRSEYRLVLRQDNADLRLTEKGYALGLVKEDRYERYLLKKEHIKNEMERLKTTNVSPTIANPVLERAESTPIKVGMSLYDLLKRPELTYENIKEIDGTRPQDLMKDAQFQCEVMIKYEGYIEKQLRQIDQFKKLENKKLREDIDYNEIDGLRIEARQKLNAIRPLSVGQASRISGVSPADISVLLIYLEQKRRKKGEVE.

FAD is bound at residue 15–20; sequence GAGHAG. Residue 274–288 participates in NAD(+) binding; the sequence is GPRYCPSIEDKIVRF.

This sequence belongs to the MnmG family. Homodimer. Heterotetramer of two MnmE and two MnmG subunits. FAD serves as cofactor.

It localises to the cytoplasm. Functionally, NAD-binding protein involved in the addition of a carboxymethylaminomethyl (cmnm) group at the wobble position (U34) of certain tRNAs, forming tRNA-cmnm(5)s(2)U34. This is tRNA uridine 5-carboxymethylaminomethyl modification enzyme MnmG from Alkaliphilus oremlandii (strain OhILAs) (Clostridium oremlandii (strain OhILAs)).